Here is a 332-residue protein sequence, read N- to C-terminus: Ribosomal RNA small subunit methyltransferase C (332 aa).

This sequence belongs to the methyltransferase superfamily. RsmC family. As to quaternary structure, monomer.

It is found in the cytoplasm. The enzyme catalyses guanosine(1207) in 16S rRNA + S-adenosyl-L-methionine = N(2)-methylguanosine(1207) in 16S rRNA + S-adenosyl-L-homocysteine + H(+). Functionally, specifically methylates the guanine in position 1207 of 16S rRNA in the 30S particle. The protein is Ribosomal RNA small subunit methyltransferase C of Pseudomonas putida (strain ATCC 700007 / DSM 6899 / JCM 31910 / BCRC 17059 / LMG 24140 / F1).